The primary structure comprises 328 residues: DNA-directed RNA polymerase subunit alpha (328 aa).

Positions 1 to 233 (MHNSATEFLK…EQLEAFIDLR (233 aa)) are alpha N-terminal domain (alpha-NTD). Residues 247 to 328 (FDPVLLRPVD…WPPVSILKND (82 aa)) form an alpha C-terminal domain (alpha-CTD) region.

It belongs to the RNA polymerase alpha chain family. Homodimer. The RNAP catalytic core consists of 2 alpha, 1 beta, 1 beta' and 1 omega subunit. When a sigma factor is associated with the core the holoenzyme is formed, which can initiate transcription.

It carries out the reaction RNA(n) + a ribonucleoside 5'-triphosphate = RNA(n+1) + diphosphate. In terms of biological role, DNA-dependent RNA polymerase catalyzes the transcription of DNA into RNA using the four ribonucleoside triphosphates as substrates. This Wigglesworthia glossinidia brevipalpis protein is DNA-directed RNA polymerase subunit alpha.